A 276-amino-acid polypeptide reads, in one-letter code: ADP-dependent (S)-NAD(P)H-hydrate dehydratase (276 aa).

In terms of domain architecture, YjeF C-terminal spans 5-269 (TPKAMCAWIP…EELPTYLKIF (265 aa)). (6S)-NADPHX-binding residues include A40, G103, and H152. G211 contributes to the AMP binding site. D212 contacts (6S)-NADPHX.

It belongs to the NnrD/CARKD family. Homotetramer. It depends on Mg(2+) as a cofactor.

It catalyses the reaction (6S)-NADHX + ADP = AMP + phosphate + NADH + H(+). The enzyme catalyses (6S)-NADPHX + ADP = AMP + phosphate + NADPH + H(+). In terms of biological role, catalyzes the dehydration of the S-form of NAD(P)HX at the expense of ADP, which is converted to AMP. Together with NAD(P)HX epimerase, which catalyzes the epimerization of the S- and R-forms, the enzyme allows the repair of both epimers of NAD(P)HX, a damaged form of NAD(P)H that is a result of enzymatic or heat-dependent hydration. The chain is ADP-dependent (S)-NAD(P)H-hydrate dehydratase from Listeria monocytogenes serovar 1/2a (strain ATCC BAA-679 / EGD-e).